We begin with the raw amino-acid sequence, 420 residues long: Light-independent protochlorophyllide reductase subunit N (420 aa).

[4Fe-4S] cluster contacts are provided by cysteine 21, cysteine 46, and cysteine 103.

This sequence belongs to the BchN/ChlN family. In terms of assembly, protochlorophyllide reductase is composed of three subunits; BchL, BchN and BchB. Forms a heterotetramer of two BchB and two BchN subunits. It depends on [4Fe-4S] cluster as a cofactor.

The enzyme catalyses chlorophyllide a + oxidized 2[4Fe-4S]-[ferredoxin] + 2 ADP + 2 phosphate = protochlorophyllide a + reduced 2[4Fe-4S]-[ferredoxin] + 2 ATP + 2 H2O. The protein operates within porphyrin-containing compound metabolism; bacteriochlorophyll biosynthesis (light-independent). Component of the dark-operative protochlorophyllide reductase (DPOR) that uses Mg-ATP and reduced ferredoxin to reduce ring D of protochlorophyllide (Pchlide) to form chlorophyllide a (Chlide). This reaction is light-independent. The NB-protein (BchN-BchB) is the catalytic component of the complex. The protein is Light-independent protochlorophyllide reductase subunit N of Chlorobium phaeobacteroides (strain DSM 266 / SMG 266 / 2430).